The primary structure comprises 214 residues: Imidazole glycerol phosphate synthase subunit HisH (214 aa).

Residues 3 to 211 (IIAVIDYDMG…VEQVQATLAT (209 aa)) form the Glutamine amidotransferase type-1 domain. Cysteine 81 functions as the Nucleophile in the catalytic mechanism. Active-site residues include histidine 186 and glutamate 188.

In terms of assembly, heterodimer of HisH and HisF.

The protein resides in the cytoplasm. The enzyme catalyses 5-[(5-phospho-1-deoxy-D-ribulos-1-ylimino)methylamino]-1-(5-phospho-beta-D-ribosyl)imidazole-4-carboxamide + L-glutamine = D-erythro-1-(imidazol-4-yl)glycerol 3-phosphate + 5-amino-1-(5-phospho-beta-D-ribosyl)imidazole-4-carboxamide + L-glutamate + H(+). It carries out the reaction L-glutamine + H2O = L-glutamate + NH4(+). It participates in amino-acid biosynthesis; L-histidine biosynthesis; L-histidine from 5-phospho-alpha-D-ribose 1-diphosphate: step 5/9. Functionally, IGPS catalyzes the conversion of PRFAR and glutamine to IGP, AICAR and glutamate. The HisH subunit catalyzes the hydrolysis of glutamine to glutamate and ammonia as part of the synthesis of IGP and AICAR. The resulting ammonia molecule is channeled to the active site of HisF. This is Imidazole glycerol phosphate synthase subunit HisH from Acaryochloris marina (strain MBIC 11017).